The following is a 540-amino-acid chain: Peptide chain release factor 3 (540 aa).

Positions 14 to 283 constitute a tr-type G domain; sequence NQRRNFAIIS…AFLDYALKPI (270 aa). Residues 23–30, 91–95, and 145–148 each bind GTP; these read SHPDAGKT, DTPGH, and NKLD.

It belongs to the TRAFAC class translation factor GTPase superfamily. Classic translation factor GTPase family. PrfC subfamily.

Its subcellular location is the cytoplasm. Its function is as follows. Increases the formation of ribosomal termination complexes and stimulates activities of RF-1 and RF-2. It binds guanine nucleotides and has strong preference for UGA stop codons. It may interact directly with the ribosome. The stimulation of RF-1 and RF-2 is significantly reduced by GTP and GDP, but not by GMP. In Gloeothece citriformis (strain PCC 7424) (Cyanothece sp. (strain PCC 7424)), this protein is Peptide chain release factor 3.